Here is a 601-residue protein sequence, read N- to C-terminus: Probable Xaa-Pro aminopeptidase P (601 aa).

The Mn(2+) site is built by Asp-398, Asp-409, Glu-507, and Glu-521.

Belongs to the peptidase M24B family. The cofactor is Mn(2+).

It carries out the reaction Release of any N-terminal amino acid, including proline, that is linked to proline, even from a dipeptide or tripeptide.. Its function is as follows. Catalyzes the removal of a penultimate prolyl residue from the N-termini of peptides. This Sclerotinia sclerotiorum (strain ATCC 18683 / 1980 / Ss-1) (White mold) protein is Probable Xaa-Pro aminopeptidase P (ampp).